The chain runs to 507 residues: Cytochrome P450 4X1 (507 aa).

Residues 14–34 (LHLALVFCLALVLMQAVKLYL) form a helical membrane-spanning segment. Residue C452 coordinates heme.

Belongs to the cytochrome P450 family. The cofactor is heme. In terms of tissue distribution, expressed at high levels in brain, mainly in neurons in different regions, including brain stem, hippocampus, cortex and cerebellum. Also expressed in cerebral vasculature. Not detected in kidney, nor liver.

It is found in the endoplasmic reticulum membrane. The protein localises to the microsome membrane. The catalysed reaction is N-(5Z,8Z,11Z,14Z-eicosatetraenoyl)-ethanolamine + reduced [NADPH--hemoprotein reductase] + O2 = N-(14,15-epoxy-5Z,8Z,11Z-eicosatrienoyl)-ethanolamine + oxidized [NADPH--hemoprotein reductase] + H2O + H(+). In terms of biological role, a cytochrome P450 monooxygenase that selectively catalyzes the epoxidation of the last double bond of the arachidonoyl moiety of anandamide, potentially modulating endocannabinoid signaling. Has no hydroxylase activity toward various fatty acids, steroids and prostaglandins. Mechanistically, uses molecular oxygen inserting one oxygen atom into a substrate, and reducing the second into a water molecule, with two electrons provided by NADPH via cytochrome P450 reductase (CPR; NADPH-ferrihemoprotein reductase). In Rattus norvegicus (Rat), this protein is Cytochrome P450 4X1.